The sequence spans 187 residues: Elongation factor P (187 aa).

This sequence belongs to the elongation factor P family.

It is found in the cytoplasm. Its pathway is protein biosynthesis; polypeptide chain elongation. Involved in peptide bond synthesis. Stimulates efficient translation and peptide-bond synthesis on native or reconstituted 70S ribosomes in vitro. Probably functions indirectly by altering the affinity of the ribosome for aminoacyl-tRNA, thus increasing their reactivity as acceptors for peptidyl transferase. The protein is Elongation factor P of Mycobacterium leprae (strain Br4923).